The chain runs to 256 residues: uncharacterized protein (256 aa).

Residue 9–33 (VTGGGQGIGAAIAQLFAENGMKVVI) participates in NADP(+) binding. Position 140 (serine 140) interacts with substrate. The Proton acceptor role is filled by tyrosine 153.

Belongs to the short-chain dehydrogenases/reductases (SDR) family.

This is an uncharacterized protein from Thermotoga maritima (strain ATCC 43589 / DSM 3109 / JCM 10099 / NBRC 100826 / MSB8).